A 1158-amino-acid polypeptide reads, in one-letter code: cGMP-specific 3',5'-cyclic phosphodiesterase (1158 aa).

2 disordered regions span residues 1 to 137 (MTDV…SQHD) and 195 to 216 (SPTVQQKSPRSLSNSSASSIPE). Residues 30–71 (ATTSAAASASSSQAKPLTNGAKKAATAAAAAGAEEGGASASN) show a composition bias toward low complexity. Residues 108–135 (GSTSKSSSIHTQTSQQERAGRPTSSASQ) show a composition bias toward polar residues. Residues 202–215 (SPRSLSNSSASSIP) show a composition bias toward low complexity. 2 consecutive GAF domains span residues 242 to 394 (DIDV…GIGI) and 426 to 640 (NLEC…GLGI). The region spanning 670–993 (SQDQTEKLTQ…RNWQDLAEKV (324 aa)) is the PDEase domain. The active-site Proton donor is the H746. A divalent metal cation is bound by residues H750, H786, D787, and D897. Disordered regions lie at residues 1034–1065 (QSQQSQHGSEDSHTPEHQRSGSRLSMKKTGAL) and 1097–1158 (VSED…CALL). The span at 1041-1052 (GSEDSHTPEHQR) shows a compositional bias: basic and acidic residues. Low complexity predominate over residues 1114–1130 (AAGSMGRMSASSSTSSA). Basic residues predominate over residues 1148–1158 (SKKRSKLCALL). C1155 is subject to Cysteine methyl ester. Residue C1155 is the site of S-farnesyl cysteine attachment. Positions 1156-1158 (ALL) are cleaved as a propeptide — removed in mature form.

The protein belongs to the cyclic nucleotide phosphodiesterase family. As to quaternary structure, interacts with PrBP. The cofactor is a divalent metal cation.

The protein resides in the cell membrane. It carries out the reaction 3',5'-cyclic GMP + H2O = GMP + H(+). Functionally, has a role regulating cGMP transport in Malpighian tubule principal cells. In Drosophila ananassae (Fruit fly), this protein is cGMP-specific 3',5'-cyclic phosphodiesterase.